The following is a 331-amino-acid chain: DNA-directed RNA polymerase subunit alpha (331 aa).

Positions 1–237 are alpha N-terminal domain (alpha-NTD); that stretch reads MQSSVTEFLI…NQLESFVYLR (237 aa). The alpha C-terminal domain (alpha-CTD) stretch occupies residues 251 to 331; the sequence is FDPILLRPVD…NWPPDNILDN (81 aa).

It belongs to the RNA polymerase alpha chain family. Homodimer. The RNAP catalytic core consists of 2 alpha, 1 beta, 1 beta' and 1 omega subunit. When a sigma factor is associated with the core the holoenzyme is formed, which can initiate transcription.

The enzyme catalyses RNA(n) + a ribonucleoside 5'-triphosphate = RNA(n+1) + diphosphate. In terms of biological role, DNA-dependent RNA polymerase catalyzes the transcription of DNA into RNA using the four ribonucleoside triphosphates as substrates. The chain is DNA-directed RNA polymerase subunit alpha from Buchnera aphidicola subsp. Baizongia pistaciae (strain Bp).